The following is a 379-amino-acid chain: Cytochrome b (379 aa).

The next 4 helical transmembrane spans lie at 34–54 (LGSL…FLTM), 78–99 (WLIR…YLHV), 114–134 (WMTG…GYVL), and 179–199 (FYTF…IHLF). Residues H84 and H98 each contribute to the heme b site. Heme b is bound by residues H183 and H197. H202 contributes to the a ubiquinone binding site. Helical transmembrane passes span 227–247 (YKDM…CLID), 289–309 (LGGV…PFYN), 321–341 (MNQI…WIGK), and 348–368 (YIMT…FNVH).

This sequence belongs to the cytochrome b family. As to quaternary structure, the main subunits of complex b-c1 are: cytochrome b, cytochrome c1 and the Rieske protein. The cofactor is heme b.

The protein localises to the mitochondrion inner membrane. In terms of biological role, component of the ubiquinol-cytochrome c reductase complex (complex III or cytochrome b-c1 complex) that is part of the mitochondrial respiratory chain. The b-c1 complex mediates electron transfer from ubiquinol to cytochrome c. Contributes to the generation of a proton gradient across the mitochondrial membrane that is then used for ATP synthesis. The protein is Cytochrome b (MT-CYB) of Locusta migratoria (Migratory locust).